The chain runs to 204 residues: Putative AgrB-like protein (204 aa).

Helical transmembrane passes span 52–74 (YGIA…YLWL), 87–107 (LNCT…FQNV), 111–131 (NWIV…FAPA), and 156–176 (LILT…LIMI).

This sequence belongs to the AgrB family.

It is found in the cell membrane. May be involved in the proteolytic processing of a quorum sensing system signal molecule precursor. The sequence is that of Putative AgrB-like protein from Listeria monocytogenes serotype 4a (strain HCC23).